The chain runs to 269 residues: tRNA (guanine-N(7)-)-methyltransferase (269 aa).

The interval Met-1 to Leu-38 is disordered. S-adenosyl-L-methionine-binding residues include Glu-91, Glu-116, Asp-143, and Asp-166. Residue Asp-166 is part of the active site. Substrate contacts are provided by residues Lys-170, Asp-202, and Thr-247 to Glu-250.

The protein belongs to the class I-like SAM-binding methyltransferase superfamily. TrmB family.

It carries out the reaction guanosine(46) in tRNA + S-adenosyl-L-methionine = N(7)-methylguanosine(46) in tRNA + S-adenosyl-L-homocysteine. The protein operates within tRNA modification; N(7)-methylguanine-tRNA biosynthesis. Catalyzes the formation of N(7)-methylguanine at position 46 (m7G46) in tRNA. This Nocardia farcinica (strain IFM 10152) protein is tRNA (guanine-N(7)-)-methyltransferase.